The following is a 725-amino-acid chain: Catalase B (725 aa).

An N-terminal signal peptide occupies residues 1–15 (MRALSLASLIGIASA). The propeptide occupies 16–27 (ACPYMTGELERR). Asn-50 is a glycosylation site (N-linked (GlcNAc...) asparagine). Residue His-101 is part of the active site. The N-linked (GlcNAc...) asparagine glycan is linked to Asn-119. The active site involves Asn-174. Tyr-388 is a binding site for heme. N-linked (GlcNAc...) asparagine glycans are attached at residues Asn-447, Asn-550, and Asn-645.

This sequence belongs to the catalase family. As to quaternary structure, homotetramer. The cofactor is heme.

It is found in the secreted. It carries out the reaction 2 H2O2 = O2 + 2 H2O. Functionally, occurs in almost all aerobically respiring organisms and serves to protect cells from the toxic effects of hydrogen peroxide through its degradation into water and oxygen. The chain is Catalase B (catB) from Aspergillus oryzae (strain ATCC 42149 / RIB 40) (Yellow koji mold).